Here is an 89-residue protein sequence, read N- to C-terminus: ATP synthase subunit H, mitochondrial (89 aa).

F-type ATP synthases have 2 components, the catalytic core F(1) and the membrane-embedded component F(0), linked together by a central stalk and a peripheral stalk. The central stalk, also called rotor shaft, is often seen as part of F(1). The peripheral stalk is seen as part of F(0). F(0) contains the membrane channel next to the rotor. F-type ATP synthases form dimers but each monomer functions independently in ATP generation. The dimer consists of 18 different polypeptides: ATP1 (subunit alpha, part of F(1), 3 molecules per monomer), ATP2 (subunit beta, part of F(1), 3 molecules per monomer), ATP3 (subunit gamma, part of the central stalk), ATP4 (subunit b, part of the peripheral stalk), ATP5/OSCP (subunit 5/OSCP, part of the peripheral stalk), ATP6 (subunit a, part of the peripheral stalk), ATP7 (subunit d, part of the peripheral stalk), ATP8 (subunit 8, part of the peripheral stalk), OLI1 (subunit c, part of the rotor, 10 molecules per monomer), ATP14 (subunit H, part of the peripheral stalk), ATP15 (subunit epsilon, part of the central stalk), ATP16 (subunit delta, part of the central stalk), ATP17 (subunit f, part of the peripheral stalk), ATP18 (subunit i/j, part of the peripheral stalk). Dimer-specific subunits are ATP19 (subunit k, at interface between monomers), ATP20 (subunit g, at interface between monomers), TIM11 (subunit e, at interface between monomers). Also contains subunit L.

The protein resides in the mitochondrion inner membrane. Mitochondrial membrane ATP synthase (F(1)F(0) ATP synthase or Complex V) produces ATP from ADP in the presence of a proton gradient across the membrane which is generated by electron transport complexes of the respiratory chain. F-type ATP synthases consist of two structural domains, F(1) - containing the extramembraneous catalytic core, and F(0) - containing the membrane proton channel, linked together by a central stalk and a peripheral stalk. During catalysis, ATP synthesis in the catalytic domain of F(1) is coupled via a rotary mechanism of the central stalk subunits to proton translocation. Part of the peripheral stalk. In Pichia angusta (Yeast), this protein is ATP synthase subunit H, mitochondrial.